We begin with the raw amino-acid sequence, 588 residues long: Urease subunit alpha (588 aa).

Positions 149-588 constitute a Urease domain; that stretch reads GGIDTHIHFI…LPMAQRYFLF (440 aa). Ni(2+)-binding residues include His-154, His-156, and Lys-237. Lys-237 carries the post-translational modification N6-carboxylysine. His-239 is a substrate binding site. Ni(2+) contacts are provided by His-266 and His-292. The Proton donor role is filled by His-340. Asp-380 contributes to the Ni(2+) binding site.

This sequence belongs to the metallo-dependent hydrolases superfamily. Urease alpha subunit family. In terms of assembly, heterotrimer of UreA (gamma), UreB (beta) and UreC (alpha) subunits. Three heterotrimers associate to form the active enzyme. Requires Ni cation as cofactor. In terms of processing, carboxylation allows a single lysine to coordinate two nickel ions.

The protein localises to the cytoplasm. The enzyme catalyses urea + 2 H2O + H(+) = hydrogencarbonate + 2 NH4(+). It functions in the pathway nitrogen metabolism; urea degradation; CO(2) and NH(3) from urea (urease route): step 1/1. The chain is Urease subunit alpha from Opitutus terrae (strain DSM 11246 / JCM 15787 / PB90-1).